Reading from the N-terminus, the 387-residue chain is Alkanesulfonate monooxygenase (387 aa).

Belongs to the SsuD family.

It carries out the reaction an alkanesulfonate + FMNH2 + O2 = an aldehyde + FMN + sulfite + H2O + 2 H(+). Its function is as follows. Catalyzes the desulfonation of aliphatic sulfonates. The sequence is that of Alkanesulfonate monooxygenase from Cupriavidus metallidurans (strain ATCC 43123 / DSM 2839 / NBRC 102507 / CH34) (Ralstonia metallidurans).